The primary structure comprises 590 residues: Arginine--tRNA ligase (590 aa).

The 'HIGH' region motif lies at 134–144; the sequence is ANPTGPMHVGH.

This sequence belongs to the class-I aminoacyl-tRNA synthetase family. In terms of assembly, monomer.

The protein localises to the cytoplasm. The enzyme catalyses tRNA(Arg) + L-arginine + ATP = L-arginyl-tRNA(Arg) + AMP + diphosphate. The polypeptide is Arginine--tRNA ligase (Beijerinckia indica subsp. indica (strain ATCC 9039 / DSM 1715 / NCIMB 8712)).